Here is a 249-residue protein sequence, read N- to C-terminus: Fatty acid elongase 5 (249 aa).

3 helical membrane-spanning segments follow: residues 23-43 (VFVN…VIVL), 68-88 (VALS…GVFN), and 100-120 (WIFV…FIVL). The short motif at 131-135 (HIYHH) is the HxxHH motif element. His-134 (nucleophile) is an active-site residue. 4 helical membrane-spanning segments follow: residues 138-158 (IGFI…AFFG), 159-179 (AWIN…TSLG), 193-213 (MIQF…HSPI), and 217-236 (WAVL…MRFY).

It belongs to the ELO family.

The protein resides in the membrane. It carries out the reaction an acyl-CoA + malonyl-CoA + H(+) = a 3-oxoacyl-CoA + CO2 + CoA. It functions in the pathway lipid metabolism; polyunsaturated fatty acid biosynthesis. Involved in the synthesis of fatty acids. Elongates C20 polyunsaturated fatty acids (PUFAs) with a preference for n-6 PUFAs. The sequence is that of Fatty acid elongase 5 from Leishmania major.